The primary structure comprises 93 residues: Large ribosomal subunit protein bL27 (93 aa).

Positions 1-9 (MLRLDLQFF) are excised as a propeptide.

Belongs to the bacterial ribosomal protein bL27 family. In terms of processing, the N-terminus is cleaved by ribosomal processing cysteine protease Prp.

The protein is Large ribosomal subunit protein bL27 of Bacillus licheniformis (strain ATCC 14580 / DSM 13 / JCM 2505 / CCUG 7422 / NBRC 12200 / NCIMB 9375 / NCTC 10341 / NRRL NRS-1264 / Gibson 46).